Here is a 358-residue protein sequence, read N- to C-terminus: Protein-arginine kinase (358 aa).

Residues 23–250 enclose the Phosphagen kinase C-terminal domain; sequence VWPVTTFSLA…SKLSVAEVAA (228 aa). ATP-binding positions include 26–30, 174–178, and 203–208; these read VTTFS, KSQCF, and SSLLLG.

This sequence belongs to the ATP:guanido phosphotransferase family.

It catalyses the reaction L-arginyl-[protein] + ATP = N(omega)-phospho-L-arginyl-[protein] + ADP + H(+). Catalyzes the specific phosphorylation of arginine residues in proteins. This is Protein-arginine kinase from Chlamydia pneumoniae (Chlamydophila pneumoniae).